A 1392-amino-acid polypeptide reads, in one-letter code: DNA-directed RNA polymerase subunit beta (1392 aa).

Positions Leu1372–Glu1392 are disordered.

Belongs to the RNA polymerase beta chain family. In terms of assembly, the RNAP catalytic core consists of 2 alpha, 1 beta, 1 beta' and 1 omega subunit. When a sigma factor is associated with the core the holoenzyme is formed, which can initiate transcription.

The catalysed reaction is RNA(n) + a ribonucleoside 5'-triphosphate = RNA(n+1) + diphosphate. DNA-dependent RNA polymerase catalyzes the transcription of DNA into RNA using the four ribonucleoside triphosphates as substrates. This Sphingopyxis alaskensis (strain DSM 13593 / LMG 18877 / RB2256) (Sphingomonas alaskensis) protein is DNA-directed RNA polymerase subunit beta.